We begin with the raw amino-acid sequence, 31 residues long: Chassatide C6 (31 aa).

The cyclopeptide (Gly-Asn) cross-link spans G1–N31. Disulfide bonds link C5/C21, C9/C23, and C14/C28.

Post-translationally, this is a cyclic peptide. In terms of tissue distribution, expressed in fruit, pedicel, root and stem but not in leaf (at protein level).

In terms of biological role, probably participates in a plant defense mechanism. This is Chassatide C6 from Chassalia chartacea (Chassalia curviflora).